Consider the following 350-residue polypeptide: tRNA-splicing endonuclease (350 aa).

Active-site residues include Y286, H297, and K328.

Belongs to the tRNA-intron endonuclease family. Archaeal long subfamily. As to quaternary structure, homodimer.

The catalysed reaction is pretRNA = a 3'-half-tRNA molecule with a 5'-OH end + a 5'-half-tRNA molecule with a 2',3'-cyclic phosphate end + an intron with a 2',3'-cyclic phosphate and a 5'-hydroxyl terminus.. Its function is as follows. Endonuclease that removes tRNA introns. Cleaves pre-tRNA at the 5'- and 3'-splice sites to release the intron. The products are an intron and two tRNA half-molecules bearing 2',3' cyclic phosphate and 5'-OH termini. Recognizes a pseudosymmetric substrate in which 2 bulged loops of 3 bases are separated by a stem of 4 bp. In Methanosarcina acetivorans (strain ATCC 35395 / DSM 2834 / JCM 12185 / C2A), this protein is tRNA-splicing endonuclease.